The chain runs to 472 residues: Glutamate--tRNA ligase (472 aa).

A 'HIGH' region motif is present at residues proline 9 to glycine 19. 4 residues coordinate Zn(2+): cysteine 98, cysteine 100, cysteine 125, and histidine 127. Residues lysine 237–arginine 241 carry the 'KMSKS' region motif. An ATP-binding site is contributed by lysine 240.

This sequence belongs to the class-I aminoacyl-tRNA synthetase family. Glutamate--tRNA ligase type 1 subfamily. As to quaternary structure, monomer. The cofactor is Zn(2+).

It is found in the cytoplasm. The catalysed reaction is tRNA(Glu) + L-glutamate + ATP = L-glutamyl-tRNA(Glu) + AMP + diphosphate. Functionally, catalyzes the attachment of glutamate to tRNA(Glu) in a two-step reaction: glutamate is first activated by ATP to form Glu-AMP and then transferred to the acceptor end of tRNA(Glu). In Klebsiella pneumoniae subsp. pneumoniae (strain ATCC 700721 / MGH 78578), this protein is Glutamate--tRNA ligase.